The sequence spans 641 residues: Peroxisomal targeting signal 1 receptor (641 aa).

A Glycyl cysteine thioester (Cys-Gly) (interchain with G-Cter in ubiquitin) cross-link involves residue Cys12. The tract at residues 12–34 is amphipathic helix 1 (AH1); sequence CSEPNALGNFVQHFTNERSYHDK. The interval 74-92 is amphipathic helix 2 (AH2); that stretch reads HLMMDRHLNLRDGPREHKE. The tract at residues 261–288 is amphipathic helix 4 (AH4); that stretch reads VEAAWDETARRTISDITRPITQINDPKL. Positions 331–335 match the WxxxF/Y motif motif; the sequence is WTEDY. TPR repeat units follow at residues 359–392, 393–426, 427–460, 503–536, 538–570, and 571–604; these read DSDTLERGMGLFNEGHLSDSIIALESEVKRNPEN, AMAWMYLGIAHAENDQDSQATTCLIKSLQIDPTN, SKARLALAVSHTNDYQKERALDTLEEWLQRTPEY, PEVQTALGLLYNMSYDYDKAVDCFKAALQNSPTD, QLWNKLGATLANSNRSQEALGAYFKALEHKPSY, and VRARSNLGISYLSLNMFQESATTFLGAIAIHPAP.

This sequence belongs to the peroxisomal targeting signal receptor family. In terms of assembly, interacts (via WxxxF/Y and LVxEF motifs) with PEX14; promoting translocation through the PEX13-PEX14 docking complex. Interacts with PEX7, promoting peroxisomal import of proteins containing a C-terminal PTS2-type peroxisomal targeting signal. In terms of processing, monoubiquitinated at Cys-12 by PEX2 during PEX5 passage through the retrotranslocation channel. Cys-12 monoubiquitination acts as a recognition signal for the PEX1-PEX6 complex and is required for PEX5 extraction and export from peroxisomes. When PEX5 recycling is compromised, polyubiquitinated by PEX10 during its passage through the retrotranslocation channel, leading to its degradation.

It localises to the cytoplasm. Its subcellular location is the cytosol. The protein localises to the peroxisome matrix. Receptor that mediates peroxisomal import of proteins containing a C-terminal PTS1-type tripeptide peroxisomal targeting signal (SKL-type). Binds to cargo proteins containing a PTS1 peroxisomal targeting signal in the cytosol, and translocates them into the peroxisome matrix by passing through the PEX13-PEX14 docking complex along with cargo proteins. PEX5 receptor is then retrotranslocated into the cytosol, leading to release of bound cargo in the peroxisome matrix, and reset for a subsequent peroxisome import cycle. In terms of biological role, in addition to promoting peroxisomal translocation of proteins containing a PTS1 peroxisomal targeting signal, mediates peroxisomal import of proteins containing a C-terminal PTS2-type peroxisomal targeting signal via its interaction with PEX7. Interaction with PEX7 only takes place when PEX7 is associated with cargo proteins containing a PTS2 peroxisomal targeting signal. PEX7 along with PTS2-containing cargo proteins are then translocated through the PEX13-PEX14 docking complex together with PEX5. The chain is Peroxisomal targeting signal 1 receptor (pex5) from Dictyostelium discoideum (Social amoeba).